Consider the following 243-residue polypeptide: Sec-independent protein translocase protein TatC (243 aa).

Transmembrane regions (helical) follow at residues 18 to 38 (VIII…NYVD), 70 to 90 (IAII…IWSF), 106 to 126 (MIPV…FTVF), 132 to 152 (FLLQ…KYIS), 153 to 173 (FALN…VVYI), 191 to 211 (YALL…DVIS), and 213 to 233 (LLMA…AKFI).

It belongs to the TatC family. As to quaternary structure, forms a complex with TatA.

It localises to the cell membrane. Part of the twin-arginine translocation (Tat) system that transports large folded proteins containing a characteristic twin-arginine motif in their signal peptide across membranes. The chain is Sec-independent protein translocase protein TatC from Carboxydothermus hydrogenoformans (strain ATCC BAA-161 / DSM 6008 / Z-2901).